We begin with the raw amino-acid sequence, 351 residues long: 1-acylglycerol-3-phosphate O-acyltransferase ABHD5 (351 aa).

Positions 79–184 (PLVLLHGFGG…LILVEPWGFP (106 aa)) constitute an AB hydrolase-1 domain. Ser124 is modified (phosphoserine). An HXXXXD motif motif is present at residues 329-334 (HYVYAD).

It belongs to the peptidase S33 family. ABHD4/ABHD5 subfamily. As to quaternary structure, interacts with ADRP and PLIN. Interacts with PNPLA2. Interacts with PLIN5; promotes interaction with PNPLA2.

It is found in the cytoplasm. It localises to the lipid droplet. The enzyme catalyses a 1-acyl-sn-glycero-3-phosphate + an acyl-CoA = a 1,2-diacyl-sn-glycero-3-phosphate + CoA. It carries out the reaction 1-(9Z-octadecenoyl)-sn-glycero-3-phosphate + (9Z)-octadecenoyl-CoA = 1,2-di-(9Z-octadecenoyl)-sn-glycero-3-phosphate + CoA. It catalyses the reaction 1-(9Z-octadecenoyl)-sn-glycero-3-phosphate + hexadecanoyl-CoA = 1-(9Z)-octadecenoyl-2-hexadecanoyl-sn-glycero-3-phosphate + CoA. The catalysed reaction is 1-(9Z-octadecenoyl)-sn-glycero-3-phosphate + octadecanoyl-CoA = 1-(9Z-octadecenoyl)-2-octadecanoyl-sn-glycero-3-phosphate + CoA. The enzyme catalyses 1-(9Z-octadecenoyl)-sn-glycero-3-phosphate + (5Z,8Z,11Z,14Z)-eicosatetraenoyl-CoA = 1-(9Z)-octadecenoyl-2-(5Z,8Z,11Z,14Z)-eicosatetraenoyl-sn-glycero-3-phosphate + CoA. It carries out the reaction eicosanoyl-CoA + 1-(9Z-octadecenoyl)-sn-glycero-3-phosphate = 1-(9Z)-octadecenoyl-2-eicosanoyl-sn-glycero-3-phosphate + CoA. It catalyses the reaction 1-hexadecanoyl-sn-glycero-3-phosphate + (9Z)-octadecenoyl-CoA = 1-hexadecanoyl-2-(9Z-octadecenoyl)-sn-glycero-3-phosphate + CoA. The catalysed reaction is 1-octadecanoyl-sn-glycero-3-phosphate + (9Z)-octadecenoyl-CoA = 1-octadecanoyl-2-(9Z-octadecenoyl)-sn-glycero-3-phosphate + CoA. The enzyme catalyses 1-(5Z,8Z,11Z,14Z-eicosatetraenoyl)-sn-glycero-3-phosphate + (9Z)-octadecenoyl-CoA = 1-(5Z,8Z,11Z,14Z)-eicosatetraenoyl-2-(9Z)-octadecenoyl-sn-glycero-3-phosphate + CoA. With respect to regulation, acyltransferase activity is inhibited by detergents such as Triton X-100 and 3-[(3-cholamidopropyl)dimethylammonio]-1-propanesulfonate (CHAPS). Acyltransferase activity is inhibited by the presence of magnesium and calcium. Coenzyme A-dependent lysophosphatidic acid acyltransferase that catalyzes the transfer of an acyl group on a lysophosphatidic acid. Functions preferentially with 1-oleoyl-lysophosphatidic acid followed by 1-palmitoyl-lysophosphatidic acid, 1-stearoyl-lysophosphatidic acid and 1-arachidonoyl-lysophosphatidic acid as lipid acceptor. Functions preferentially with arachidonoyl-CoA followed by oleoyl-CoA as acyl group donors. Functions in phosphatidic acid biosynthesis. May regulate the cellular storage of triacylglycerol through activation of the phospholipase PNPLA2. Involved in keratinocyte differentiation. Regulates lipid droplet fusion. This is 1-acylglycerol-3-phosphate O-acyltransferase ABHD5 from Rattus norvegicus (Rat).